Reading from the N-terminus, the 269-residue chain is Thymidylate synthase (269 aa).

Residue arginine 21 participates in dUMP binding. Histidine 51 lines the (6R)-5,10-methylene-5,6,7,8-tetrahydrofolate pocket. 126–127 contributes to the dUMP binding site; sequence RR. Cysteine 146 acts as the Nucleophile in catalysis. DUMP-binding positions include 171-174, asparagine 182, and 212-214; these read RSGD and HLY. Aspartate 174 is a (6R)-5,10-methylene-5,6,7,8-tetrahydrofolate binding site. Alanine 268 contacts (6R)-5,10-methylene-5,6,7,8-tetrahydrofolate.

It belongs to the thymidylate synthase family. Bacterial-type ThyA subfamily. In terms of assembly, homodimer.

The protein localises to the cytoplasm. It carries out the reaction dUMP + (6R)-5,10-methylene-5,6,7,8-tetrahydrofolate = 7,8-dihydrofolate + dTMP. Its pathway is pyrimidine metabolism; dTTP biosynthesis. Its function is as follows. Catalyzes the reductive methylation of 2'-deoxyuridine-5'-monophosphate (dUMP) to 2'-deoxythymidine-5'-monophosphate (dTMP) while utilizing 5,10-methylenetetrahydrofolate (mTHF) as the methyl donor and reductant in the reaction, yielding dihydrofolate (DHF) as a by-product. This enzymatic reaction provides an intracellular de novo source of dTMP, an essential precursor for DNA biosynthesis. This Methylocella silvestris (strain DSM 15510 / CIP 108128 / LMG 27833 / NCIMB 13906 / BL2) protein is Thymidylate synthase.